We begin with the raw amino-acid sequence, 294 residues long: 4-hydroxy-tetrahydrodipicolinate synthase (294 aa).

Residue threonine 46 coordinates pyruvate. Tyrosine 135 serves as the catalytic Proton donor/acceptor. Lysine 164 functions as the Schiff-base intermediate with substrate in the catalytic mechanism. Isoleucine 205 provides a ligand contact to pyruvate.

It belongs to the DapA family. Homotetramer; dimer of dimers.

The protein localises to the cytoplasm. The catalysed reaction is L-aspartate 4-semialdehyde + pyruvate = (2S,4S)-4-hydroxy-2,3,4,5-tetrahydrodipicolinate + H2O + H(+). It participates in amino-acid biosynthesis; L-lysine biosynthesis via DAP pathway; (S)-tetrahydrodipicolinate from L-aspartate: step 3/4. In terms of biological role, catalyzes the condensation of (S)-aspartate-beta-semialdehyde [(S)-ASA] and pyruvate to 4-hydroxy-tetrahydrodipicolinate (HTPA). The sequence is that of 4-hydroxy-tetrahydrodipicolinate synthase from Nitratiruptor sp. (strain SB155-2).